The following is a 310-amino-acid chain: Homoserine kinase (310 aa).

91–101 is an ATP binding site; it reads PIGSGLGSSAC.

Belongs to the GHMP kinase family. Homoserine kinase subfamily.

Its subcellular location is the cytoplasm. The catalysed reaction is L-homoserine + ATP = O-phospho-L-homoserine + ADP + H(+). It participates in amino-acid biosynthesis; L-threonine biosynthesis; L-threonine from L-aspartate: step 4/5. In terms of biological role, catalyzes the ATP-dependent phosphorylation of L-homoserine to L-homoserine phosphate. This chain is Homoserine kinase, found in Shigella sonnei (strain Ss046).